A 27-amino-acid chain; its full sequence is Cupiennin-3b (27 aa).

At Glu27 the chain carries Glutamic acid 1-amide.

In terms of tissue distribution, expressed by the venom gland.

Its subcellular location is the secreted. This is Cupiennin-3b from Cupiennius salei (American wandering spider).